Here is a 173-residue protein sequence, read N- to C-terminus: Bifunctional protein PyrR (173 aa).

The PRPP-binding signature appears at 93–105 (IILVDDVLYTGRT).

This sequence belongs to the purine/pyrimidine phosphoribosyltransferase family. PyrR subfamily. In terms of assembly, homodimer and homohexamer; in equilibrium.

It carries out the reaction UMP + diphosphate = 5-phospho-alpha-D-ribose 1-diphosphate + uracil. In terms of biological role, regulates transcriptional attenuation of the pyrimidine nucleotide (pyr) operon by binding in a uridine-dependent manner to specific sites on pyr mRNA. This disrupts an antiterminator hairpin in the RNA and favors formation of a downstream transcription terminator, leading to a reduced expression of downstream genes. Functionally, also displays a weak uracil phosphoribosyltransferase activity which is not physiologically significant. The polypeptide is Bifunctional protein PyrR (Streptococcus equi subsp. zooepidemicus (strain H70)).